Here is a 434-residue protein sequence, read N- to C-terminus: MARTDIARRVYNHTWKLDPIVRSLLDTDFYKLLMLQMIWGMYPKVDATFSLINRTTSVRLADEIDEGELREQLDHARTLRFSKKEMIWLGGNNFYGRKQIFEPEFLAWLEGFRLPDYELSKRDGQYELSFSGPWMYTTLWEIPALAIINELRSRAAMRAFGPFALDVLYARAKAKMWAKTERLKALPGIRISDFGTRRRHSFLWQRWCVEALKEGIGEAFTGTSNVLLAMDNDLEALGTNAHELPMVFAALANSEKELKQAPYKVLQDWQRYYGGNLLIVLPDAFGTASFLRDAPDWVADWTGFRPDSAPPIEGGEKILSWWRERGKDPKQKLLIFSDGLEVETIEETYRHFKGKVRMSFGWGTNLTNDFEGCAPTETNSLDAISLVCKVTEANGRPAVKLSDNPAKATGDEKEIERYLRIFGEKDRVEQLVKV.

Residue His-242 is modified to Phosphohistidine; by autocatalysis.

This sequence belongs to the NAPRTase family. Post-translationally, transiently phosphorylated on a His residue during the reaction cycle. Phosphorylation strongly increases the affinity for substrates and increases the rate of nicotinate D-ribonucleotide production. Dephosphorylation regenerates the low-affinity form of the enzyme, leading to product release.

The enzyme catalyses nicotinate + 5-phospho-alpha-D-ribose 1-diphosphate + ATP + H2O = nicotinate beta-D-ribonucleotide + ADP + phosphate + diphosphate. It participates in cofactor biosynthesis; NAD(+) biosynthesis; nicotinate D-ribonucleotide from nicotinate: step 1/1. Catalyzes the synthesis of beta-nicotinate D-ribonucleotide from nicotinate and 5-phospho-D-ribose 1-phosphate at the expense of ATP. This is Nicotinate phosphoribosyltransferase from Mesorhizobium japonicum (strain LMG 29417 / CECT 9101 / MAFF 303099) (Mesorhizobium loti (strain MAFF 303099)).